Here is a 492-residue protein sequence, read N- to C-terminus: MTDLHRLSIRELAEGLSQAKFSSRELTEHYLKRIAKIDPQVKSYVTVTSEQALREADAADAALKAGNATALTGIPLAHKDIFCTKGIKTTAGSKMLDNFISPYDATVVEKTKAAGLVTLGKVNMDEFAMGSTSESSYVGATSNPWALDHVPGGSSGGSAAAVAADLAPFATGTDTGGSIRQPASFCGLTGLKPTYGRVSRFGIIAYASSLDQAGPMARSAEDCAYLMNVIAGHDAKDSTSVKKEVDDYVANLNGTSVKGLRIGIPKQYFNVAGLDADVKARVEESLKKLEEMGATLVEIDLNMTEAYVPTYYLIAPAEASSNLSRYDGVRYGYRCENPADLMDLYKRSRSEGFGPEIQRRILIGTYALSAGYYDAYYVKAQKVRRLIQQDFLKAFENVDVIAAPAAPTTAYKIGASLDPVEMYLGDIYTIAVNLAGLPAINAPVGFDKDNLPVGLQLIGNYWSESQLLSIVHQYQQNTDWHTKRAAIAEENA.

Residues Lys-79 and Ser-154 each act as charge relay system in the active site. Catalysis depends on Ser-178, which acts as the Acyl-ester intermediate.

This sequence belongs to the amidase family. GatA subfamily. As to quaternary structure, heterotrimer of A, B and C subunits.

The catalysed reaction is L-glutamyl-tRNA(Gln) + L-glutamine + ATP + H2O = L-glutaminyl-tRNA(Gln) + L-glutamate + ADP + phosphate + H(+). Allows the formation of correctly charged Gln-tRNA(Gln) through the transamidation of misacylated Glu-tRNA(Gln) in organisms which lack glutaminyl-tRNA synthetase. The reaction takes place in the presence of glutamine and ATP through an activated gamma-phospho-Glu-tRNA(Gln). The protein is Glutamyl-tRNA(Gln) amidotransferase subunit A of Acinetobacter baumannii (strain ATCC 17978 / DSM 105126 / CIP 53.77 / LMG 1025 / NCDC KC755 / 5377).